The primary structure comprises 362 residues: Atypical chemokine receptor 3 (362 aa).

At 1 to 47 (MDVHLFDYVEPGNYSDINWPCNSSDCIVVDTVQCPAMPNKNVLLYTL) the chain is on the extracellular side. Residues Asn13 and Asn22 are each glycosylated (N-linked (GlcNAc...) asparagine). A helical transmembrane segment spans residues 48 to 68 (SFIYIFIFVIGMIANSVVVWV). At 69–81 (NIQAKTTGYDTHC) the chain is on the cytoplasmic side. The chain crosses the membrane as a helical span at residues 82–102 (YILNLAIADLWVVITIPVWVV). Residues 103 to 118 (SLVQHNQWPMGELTCK) are Extracellular-facing. A disulfide bridge links Cys117 with Cys196. A helical membrane pass occupies residues 119-139 (ITHLIFSINLFGSIFFLACMS). Topologically, residues 140–162 (VDRYLSITYFTSTSSYKKKMVRR) are cytoplasmic. Residues 163 to 183 (VVCVLVWLLAFFVSLPDTYYL) traverse the membrane as a helical segment. The Extracellular segment spans residues 184–213 (KTVTSASNNETYCRSFYPEHSIKEWLIGME). Residues 214–234 (LVSVILGFAVPFTIIAIFYFL) form a helical membrane-spanning segment. Residues 235-252 (LARAMSASGDQEKHSSRK) are Cytoplasmic-facing. The chain crosses the membrane as a helical span at residues 253–273 (IIFSYVVVFLVCWLPYHFVVL). At 274–296 (LDIFSILHYIPFTCQLENVLFTA) the chain is on the extracellular side. Residues 297 to 319 (LHVTQCLSLVHCCVNPVLYSFIN) form a helical membrane-spanning segment. At 320–362 (RNYRYELMKAFIFKYSAKTGLTKLIDASRVSETEYSALEQNTK) the chain is on the cytoplasmic side. The C-terminal cytoplasmic tail stretch occupies residues 324-362 (YELMKAFIFKYSAKTGLTKLIDASRVSETEYSALEQNTK). Phosphoserine is present on residues Ser347, Ser350, and Ser355.

Belongs to the G-protein coupled receptor 1 family. Atypical chemokine receptor subfamily. Homodimer. Can form heterodimers with CXCR4; heterodimerization may regulate CXCR4 signaling activity. Interacts with ARRB1 and ARRB2. In terms of processing, the Ser/Thr residues in the C-terminal cytoplasmic tail may be phosphorylated. Ubiquitinated at the Lys residues in its C-terminal cytoplasmic tail and is essential for correct trafficking from and to the cell membrane. Deubiquitinated by CXCL12-stimulation in a reversible manner. In terms of tissue distribution, expressed in vascular smooth muscle cells (at protein level). In brain, expressed in blood vessels, pyramidal cells in hippocampal subfield CA3, mature dentate gyrus granule cells, ventricle walls, olfactory bulb, accumbens shell, supraoptic, lateroanterior and ventromedial hypothalamic nuclei, medial region of thalamus, and motor nuclei, central gray and raphe magnus nucleus of brain stem. Detected in primary neurons, GABAergic neurons, astrocytes, cerebral cortex, ventral striatum and choroid plexus. Not detected in mesencephalon.

It localises to the cell membrane. The protein localises to the early endosome. The protein resides in the recycling endosome. Atypical chemokine receptor that controls chemokine levels and localization via high-affinity chemokine binding that is uncoupled from classic ligand-driven signal transduction cascades, resulting instead in chemokine sequestration, degradation, or transcytosis. Also known as interceptor (internalizing receptor) or chemokine-scavenging receptor or chemokine decoy receptor. Acts as a receptor for chemokines CXCL11 and CXCL12/SDF1. Chemokine binding does not activate G-protein-mediated signal transduction but instead induces beta-arrestin recruitment, leading to ligand internalization and activation of MAPK signaling pathway. Required for regulation of CXCR4 protein levels in migrating interneurons, thereby adapting their chemokine responsiveness. In glioma cells, transduces signals via MEK/ERK pathway, mediating resistance to apoptosis. Promotes cell growth and survival. Not involved in cell migration, adhesion or proliferation of normal hematopoietic progenitors but activated by CXCL11 in malignant hemapoietic cells, leading to phosphorylation of ERK1/2 (MAPK3/MAPK1) and enhanced cell adhesion and migration. Plays a regulatory role in CXCR4-mediated activation of cell surface integrins by CXCL12. Required for heart valve development. In terms of biological role, atypical chemokine receptor that controls chemokine levels and localization via high-affinity chemokine binding that is uncoupled from classic ligand-driven signal transduction cascades, resulting instead in chemokine sequestration, degradation, or transcytosis. Also known as interceptor (internalizing receptor) or chemokine-scavenging receptor or chemokine decoy receptor. Acts as a receptor for chemokines CXCL11 and CXCL12/SDF1. Chemokine binding does not activate G-protein-mediated signal transduction but instead induces beta-arrestin recruitment, leading to ligand internalization and activation of MAPK signaling pathway. Required for regulation of CXCR4 protein levels in migrating interneurons, thereby adapting their chemokine responsiveness. In glioma cells, transduces signals via MEK/ERK pathway, mediating resistance to apoptosis. Promotes cell growth and survival. Not involved in cell migration, adhesion or proliferation of normal hematopoietic progenitors but activated by CXCL11 in malignant hemapoietic cells, leading to phosphorylation of ERK1/2 (MAPK3/MAPK1) and enhanced cell adhesion and migration. Plays a regulatory role in CXCR4-mediated activation of cell surface integrins by CXCL12. Required for heart valve development. Regulates axon guidance in the oculomotor system through the regulation of CXCL12 levels. The sequence is that of Atypical chemokine receptor 3 from Rattus norvegicus (Rat).